A 148-amino-acid polypeptide reads, in one-letter code: Large ribosomal subunit protein bL9 (148 aa).

The protein belongs to the bacterial ribosomal protein bL9 family.

Functionally, binds to the 23S rRNA. This Methylobacillus flagellatus (strain ATCC 51484 / DSM 6875 / VKM B-1610 / KT) protein is Large ribosomal subunit protein bL9.